Consider the following 959-residue polypeptide: Protein moonraker (959 aa).

The tract at residues Leu124–Val156 is disordered. Over residues Thr134–Asp145 the composition is skewed to basic and acidic residues. Ser279 carries the phosphoserine modification. The segment covering Glu456–Asp470 has biased composition (basic and acidic residues). Disordered regions lie at residues Glu456–Lys560 and Arg572–Ser610. A compositionally biased stretch (polar residues) spans Pro515–Leu533. A compositionally biased stretch (pro residues) spans Trp547 to Ser558. A coiled-coil region spans residues Gln582–Ala674. Over residues Glu583–Ala599 the composition is skewed to basic and acidic residues. At Ser691 the chain carries Phosphoserine. 2 disordered regions span residues Ser692–Pro721 and Leu848–Val883. Over residues Ala707–Ala717 the composition is skewed to low complexity. Residues Gly857–Gln874 are compositionally biased toward basic and acidic residues. A necessary and sufficient for CEP20-binding region spans residues Gly877–Ala959.

Interacts with CEP63 and WDR62. Forms a complex with OFD1 and CEP20/FOR20. Interacts with PCM1.

It localises to the cytoplasm. The protein localises to the cytoskeleton. It is found in the microtubule organizing center. The protein resides in the centrosome. Its subcellular location is the centriolar satellite. In terms of biological role, involved in centriole duplication. Positively regulates CEP63 centrosomal localization. Required for WDR62 centrosomal localization and promotes the centrosomal localization of CDK2. May play a role in cilium assembly. The polypeptide is Protein moonraker (Kiaa0753) (Mus musculus (Mouse)).